Reading from the N-terminus, the 78-residue chain is Putative Fe(2+) transport protein A (78 aa).

This sequence belongs to the FeoA family.

In terms of biological role, might be involved in Fe(2+) ion uptake. The protein is Putative Fe(2+) transport protein A of Helicobacter pylori (strain J99 / ATCC 700824) (Campylobacter pylori J99).